A 92-amino-acid chain; its full sequence is C-C motif chemokine 22 (92 aa).

Residues 1–24 (MATLRVPLLVALVLLAVAIQTSDA) form the signal peptide. Intrachain disulfides connect C36–C60 and C37–C76.

It belongs to the intercrine beta (chemokine CC) family. In terms of tissue distribution, expressed by activated splenic B-lymphocytes and dendritic cells. Low expression in lung, thymocytes, lymph node, and unstimulated splenic cells.

It localises to the secreted. Its function is as follows. Chemotactic for activated T-lymphocytes. May play an important role in the collaboration of dendritic cells and B-lymphocytes with T-cells in immune responses. The sequence is that of C-C motif chemokine 22 (Ccl22) from Mus musculus (Mouse).